The following is a 1024-amino-acid chain: Error-prone DNA polymerase (1024 aa).

The protein belongs to the DNA polymerase type-C family. DnaE2 subfamily.

It is found in the cytoplasm. It carries out the reaction DNA(n) + a 2'-deoxyribonucleoside 5'-triphosphate = DNA(n+1) + diphosphate. Its function is as follows. DNA polymerase involved in damage-induced mutagenesis and translesion synthesis (TLS). It is not the major replicative DNA polymerase. The sequence is that of Error-prone DNA polymerase from Vibrio campbellii (strain ATCC BAA-1116).